A 590-amino-acid polypeptide reads, in one-letter code: Protein NRT1/ PTR FAMILY 6.3 (590 aa).

2 consecutive transmembrane segments (helical) span residues 46–66 (LTTLGIGVNLVTYLTGTMHLG) and 77–97 (FLGTSFMLCLLGGFIADTFLG). Thr101 is subject to Phosphothreonine; by CIPK23. Helical transmembrane passes span 102–122 (IAIFAAIQATGVSILTLSTII), 143–163 (GIQLTVLYLALYLTALGTGGV), 193–213 (FFFCINVGSLLAVTVLVYVQD), 219–239 (WGYGICAFAIVLALSVFLAGT), 342–362 (MLPIWATCILFWTVHAQLTTL), 374–394 (IGSFEIPPASMAVFYVGGLLL), 423–443 (IGLGLFFGSMAMAVAALVELK), 460–480 (LGFYLLIPQYLIVGIGEALIY), 501–521 (GLLLSTLALGFFFSSVLVTIV), and 542–562 (YNFYWLVAVLVALNFLIFLVF). His356 and Thr360 together coordinate substrate.

It belongs to the major facilitator superfamily. Proton-dependent oligopeptide transporter (POT/PTR) (TC 2.A.17) family. As to quaternary structure, monomer and homodimer. The dimer has the 2 monomers in the same orientation. Interacts with CIPK23. Acts as a high-affinity nitrate transporter when phosphorylated and as a low-affinity transporter when dephosphorylated. Forms homodimer when unphosphorylated and monomer when phosphorylated. Low nitrogen concentration in the medium stimulates phosphorylation. Phosphorylation also regulates the nitrate signaling. In terms of tissue distribution, expressed in the stele in lateral root primordia before emergence and in the tip of primary and emerged lateral roots. Detected in emerging and immature leaves, guard cells, flower buds, style, stigma, anthers and pollen grains. Not detected in the shoot apical meristem.

The protein resides in the membrane. Functionally, dual affinity nitrate transporter. Involved in proton-dependent nitrate uptake and in the regulation of the nitrate transporter NRT2.1. Also acts as a nitrate sensor that trigger a specific signaling pathway stimulating lateral root growth and seed germination. The uptake activity is not required for sensor function. Displays an auxin transport facilitation inhibited by high nitrate concentration. Required to prevent auxin accumulation in preemerged lateral root primordia and young lateral roots when external nitrate concentration is low or null. May be involved in the basipetal transport of auxin out of the lateral root tips. Acts as a bidirectional transporter involved in root-to-shoot nitrate translocation. Recognizes specifically nitrate and chlorate, but not nitrite, alanine, sulfate, phosphate or the di-peptide Ala-Ala. The polypeptide is Protein NRT1/ PTR FAMILY 6.3 (NPF6.3) (Arabidopsis thaliana (Mouse-ear cress)).